Consider the following 576-residue polypeptide: MNIFNQLKQDIIAASQQLYNNQEIANTATIETPKDSFNGDLSSNIAMIIASKESIAPREVALKFKEVLVTLPYIASIEIAGPGFINFTIKAESWQAAIKDILQHEEKFFEIDIDKNSNINIEYVSANPTGPMHIGHARGAVYGDVLARILQKVGYSVTKEYYVNDAGSQINDLVSTVLLRYKEALGEQITIPIGLYPGEYLIPLGEILSKEYGNKLLTMNDVERFKIIKSLAVEKMLDLNRKDLADLGIKHDIFFSEQSLYDKGEIEKTVKLLESMGLIYEGTLPAPKGKVHEDWKHKVQKLFKSTNYGDSQDRPIEKADGSWSYFASDLAYAKDKIDRGANHLIYVLGADHSGYVKRIEAIVKALGQEKVKVDVKICQLVNFVENGVPVKMSKRLGSFASVQDVNKKVGKDIIRFMMLTRQNDKPLDFDLVKVKEQSRENPIFYVQYAHVRTKSILSKARELMPEAYNSFKEGKYNLSLLSTEEEIEIIKLLAAWTKTLEASVKYFEPHRIAFYLINLASKFHSMWNFGKENSDYRFIIENNQELTLARLALASVIQKVIASGLEVIGVEPMVTM.

The 'HIGH' region motif lies at 126–136; sequence ANPTGPMHIGH.

This sequence belongs to the class-I aminoacyl-tRNA synthetase family. In terms of assembly, monomer.

It is found in the cytoplasm. It carries out the reaction tRNA(Arg) + L-arginine + ATP = L-arginyl-tRNA(Arg) + AMP + diphosphate. The protein is Arginine--tRNA ligase of Rickettsia typhi (strain ATCC VR-144 / Wilmington).